We begin with the raw amino-acid sequence, 124 residues long: UPF0375 protein Y45F10C.4 (124 aa).

Residues 1–23 form the signal peptide; the sequence is MNFLPSTVLLLSFVVAIISGSFS. Residues Asn36 and Asn62 are each glycosylated (N-linked (GlcNAc...) asparagine).

It belongs to the UPF0375 family.

It localises to the secreted. This is UPF0375 protein Y45F10C.4 from Caenorhabditis elegans.